We begin with the raw amino-acid sequence, 270 residues long: Shikimate dehydrogenase (NADP(+)) (270 aa).

Residues S14–S16 and T61 contribute to the shikimate site. K65 serves as the catalytic Proton acceptor. Shikimate-binding residues include N86 and D101. NADP(+) contacts are provided by residues G126 to A130, N150 to K155, and M215. Y217 contacts shikimate. G238 lines the NADP(+) pocket.

The protein belongs to the shikimate dehydrogenase family. Homodimer.

The enzyme catalyses shikimate + NADP(+) = 3-dehydroshikimate + NADPH + H(+). It participates in metabolic intermediate biosynthesis; chorismate biosynthesis; chorismate from D-erythrose 4-phosphate and phosphoenolpyruvate: step 4/7. Involved in the biosynthesis of the chorismate, which leads to the biosynthesis of aromatic amino acids. Catalyzes the reversible NADPH linked reduction of 3-dehydroshikimate (DHSA) to yield shikimate (SA). The sequence is that of Shikimate dehydrogenase (NADP(+)) from Methylobacillus flagellatus (strain ATCC 51484 / DSM 6875 / VKM B-1610 / KT).